Consider the following 310-residue polypeptide: Ribose-phosphate pyrophosphokinase (310 aa).

ATP-binding positions include 34-36 (DQE) and 93-94 (RQ). Mg(2+) contacts are provided by H127 and D167. Residue K190 is part of the active site. D-ribose 5-phosphate contacts are provided by residues R192, D216, and 220–224 (DSGGT).

This sequence belongs to the ribose-phosphate pyrophosphokinase family. Class I subfamily. In terms of assembly, homohexamer. The cofactor is Mg(2+).

The protein resides in the cytoplasm. The catalysed reaction is D-ribose 5-phosphate + ATP = 5-phospho-alpha-D-ribose 1-diphosphate + AMP + H(+). Its pathway is metabolic intermediate biosynthesis; 5-phospho-alpha-D-ribose 1-diphosphate biosynthesis; 5-phospho-alpha-D-ribose 1-diphosphate from D-ribose 5-phosphate (route I): step 1/1. In terms of biological role, involved in the biosynthesis of the central metabolite phospho-alpha-D-ribosyl-1-pyrophosphate (PRPP) via the transfer of pyrophosphoryl group from ATP to 1-hydroxyl of ribose-5-phosphate (Rib-5-P). This chain is Ribose-phosphate pyrophosphokinase, found in Brucella melitensis biotype 1 (strain ATCC 23456 / CCUG 17765 / NCTC 10094 / 16M).